Reading from the N-terminus, the 772-residue chain is Metal transporter CNNM4 (772 aa).

At 1–175 (MAPGGGGGRR…SLLFMVEEHG (175 aa)) the chain is on the extracellular side. Asn120 is a glycosylation site (N-linked (GlcNAc...) asparagine). A helical membrane pass occupies residues 176–196 (RFLPLWLHILLVLVLLVLSGI). One can recognise a CNNM transmembrane domain in the interval 176–356 (RFLPLWLHIL…EPYNDLVKEE (181 aa)). The Cytoplasmic portion of the chain corresponds to 197-237 (FSGLNLGLMALDPMELRIVQNCGTEKERRYARKIEPIRRKG). An intramembrane region (helical) is located at residues 238-258 (NYLLCSLLLGNVLVNTSLTIL). The Cytoplasmic segment spans residues 259-261 (LDN). Residues 262–282 (LIGSGIMAVASSTIGIVIFGE) traverse the membrane as a helical segment. Residues 283–290 (ILPQALCS) lie on the Extracellular side of the membrane. A helical membrane pass occupies residues 291–313 (RHGLAVGANTIVLTKIFMLLTFP). The Cytoplasmic segment spans residues 314 to 772 (LSFPISKLLD…LHRASQEGTI (459 aa)). 2 consecutive CBS domains span residues 375 to 436 (MTQL…CTPL) and 443 to 509 (YNHP…ILDE). The interval 647–676 (PDRSPAHPTPLSRSASLSYPDRNTDMTPSS) is disordered. Ser658, Ser662, and Ser767 each carry phosphoserine.

The protein belongs to the ACDP family. In terms of assembly, interacts with COX11. In terms of tissue distribution, present in spinal cord dorsal horn neurons and in developing teeth (at protein level). In the tooth, higher expression is found in the ameloblasts during the transition and maturation phases of amelogenesis; reduced expression in the odontoblasts.

The protein localises to the cell membrane. Probable metal transporter. The interaction with the metal ion chaperone COX11 suggests that it may play a role in sensory neuron functions. May play a role in biomineralization and retinal function. The protein is Metal transporter CNNM4 (Cnnm4) of Rattus norvegicus (Rat).